Consider the following 657-residue polypeptide: Translation factor GUF1, mitochondrial (657 aa).

A mitochondrion-targeting transit peptide spans 1–39 (MRGCLQSVKWLTSALRPSQSLASSTRYPRRLLSTSAPRN). The tr-type G domain maps to 59–239 (ERFRNFCIVA…TVIEQIPAPV (181 aa)). Residues 121 to 128 (HQGEDYLL), 185 to 189 (INKVD), and 239 to 242 (VGDR) contribute to the GTP site.

This sequence belongs to the TRAFAC class translation factor GTPase superfamily. Classic translation factor GTPase family. LepA subfamily.

The protein resides in the mitochondrion inner membrane. The catalysed reaction is GTP + H2O = GDP + phosphate + H(+). In terms of biological role, promotes mitochondrial protein synthesis. May act as a fidelity factor of the translation reaction, by catalyzing a one-codon backward translocation of tRNAs on improperly translocated ribosomes. Binds to mitochondrial ribosomes in a GTP-dependent manner. The chain is Translation factor GUF1, mitochondrial from Ajellomyces capsulatus (strain H143) (Darling's disease fungus).